The sequence spans 367 residues: Glutamate 5-kinase (367 aa).

An ATP-binding site is contributed by K10. Residues S50, D137, and N149 each coordinate substrate. ATP-binding positions include 169-170 (TD) and 211-217 (TGGMATK). The region spanning 275–353 (AGEITVDDGA…QQISEILGYE (79 aa)) is the PUA domain.

This sequence belongs to the glutamate 5-kinase family.

It localises to the cytoplasm. The enzyme catalyses L-glutamate + ATP = L-glutamyl 5-phosphate + ADP. The protein operates within amino-acid biosynthesis; L-proline biosynthesis; L-glutamate 5-semialdehyde from L-glutamate: step 1/2. In terms of biological role, catalyzes the transfer of a phosphate group to glutamate to form L-glutamate 5-phosphate. This chain is Glutamate 5-kinase, found in Yersinia enterocolitica serotype O:8 / biotype 1B (strain NCTC 13174 / 8081).